The chain runs to 281 residues: Bis(5'-nucleosyl)-tetraphosphatase, symmetrical (281 aa).

Belongs to the Ap4A hydrolase family.

It catalyses the reaction P(1),P(4)-bis(5'-adenosyl) tetraphosphate + H2O = 2 ADP + 2 H(+). In terms of biological role, hydrolyzes diadenosine 5',5'''-P1,P4-tetraphosphate to yield ADP. The polypeptide is Bis(5'-nucleosyl)-tetraphosphatase, symmetrical (Acidovorax ebreus (strain TPSY) (Diaphorobacter sp. (strain TPSY))).